We begin with the raw amino-acid sequence, 121 residues long: NADH-ubiquinone oxidoreductase chain 3 (121 aa).

The next 3 helical transmembrane spans lie at isoleucine 11 to phenylalanine 31, phenylalanine 63 to tryptophan 83, and leucine 90 to isoleucine 110.

Belongs to the complex I subunit 3 family.

Its subcellular location is the mitochondrion membrane. It catalyses the reaction a ubiquinone + NADH + 5 H(+)(in) = a ubiquinol + NAD(+) + 4 H(+)(out). Core subunit of the mitochondrial membrane respiratory chain NADH dehydrogenase (Complex I) that is believed to belong to the minimal assembly required for catalysis. Complex I functions in the transfer of electrons from NADH to the respiratory chain. The immediate electron acceptor for the enzyme is believed to be ubiquinone. In Porphyra purpurea (Red seaweed), this protein is NADH-ubiquinone oxidoreductase chain 3 (NAD3).